A 194-amino-acid chain; its full sequence is GTP cyclohydrolase 1 (194 aa).

Positions 83, 86, and 155 each coordinate Zn(2+).

The protein belongs to the GTP cyclohydrolase I family. Toroid-shaped homodecamer, composed of two pentamers of five dimers.

It carries out the reaction GTP + H2O = 7,8-dihydroneopterin 3'-triphosphate + formate + H(+). The protein operates within cofactor biosynthesis; 7,8-dihydroneopterin triphosphate biosynthesis; 7,8-dihydroneopterin triphosphate from GTP: step 1/1. This is GTP cyclohydrolase 1 (folE) from Streptococcus pyogenes serotype M1.